A 308-amino-acid chain; its full sequence is Isoaspartyl peptidase/L-asparaginase (308 aa).

At Met-1 the chain carries N-acetylmethionine. Catalysis depends on Thr-168, which acts as the Nucleophile. Substrate contacts are provided by residues 196 to 199 (RVGD) and 219 to 222 (TGHG).

Belongs to the Ntn-hydrolase family. As to quaternary structure, heterodimer of an alpha and beta chain produced by autocleavage. This heterodimer may then dimerize in turn, giving rise to a heterotetramer. In terms of processing, cleaved into an alpha and beta chain by autocatalysis; this activates the enzyme. The N-terminal residue of the beta subunit is responsible for the nucleophile hydrolase activity.

The protein resides in the cytoplasm. It carries out the reaction L-asparagine + H2O = L-aspartate + NH4(+). The enzyme catalyses Cleavage of a beta-linked Asp residue from the N-terminus of a polypeptide.. In terms of biological role, has both L-asparaginase and beta-aspartyl peptidase activity. May be involved in the production of L-aspartate, which can act as an excitatory neurotransmitter in some brain regions. Is highly active with L-Asp beta-methyl ester. Besides, has catalytic activity toward beta-aspartyl dipeptides and their methyl esters, including beta-L-Asp-L-Phe, beta-L-Asp-L-Phe methyl ester (aspartame), beta-L-Asp-L-Ala, beta-L-Asp-L-Leu and beta-L-Asp-L-Lys. Does not have aspartylglucosaminidase activity and is inactive toward GlcNAc-L-Asn. Likewise, has no activity toward glutamine. The protein is Isoaspartyl peptidase/L-asparaginase (ASRGL1) of Macaca fascicularis (Crab-eating macaque).